Here is a 393-residue protein sequence, read N- to C-terminus: ATP phosphoribosyltransferase regulatory subunit (393 aa).

The protein belongs to the class-II aminoacyl-tRNA synthetase family. HisZ subfamily. As to quaternary structure, heteromultimer composed of HisG and HisZ subunits.

Its subcellular location is the cytoplasm. The protein operates within amino-acid biosynthesis; L-histidine biosynthesis; L-histidine from 5-phospho-alpha-D-ribose 1-diphosphate: step 1/9. In terms of biological role, required for the first step of histidine biosynthesis. May allow the feedback regulation of ATP phosphoribosyltransferase activity by histidine. The protein is ATP phosphoribosyltransferase regulatory subunit of Shouchella clausii (strain KSM-K16) (Alkalihalobacillus clausii).